The primary structure comprises 465 residues: UDP-N-acetylglucosamine 1-carboxyvinyltransferase (465 aa).

Phosphoenolpyruvate is bound at residue 22-23; the sequence is KN. Arginine 94 serves as a coordination point for UDP-N-acetyl-alpha-D-glucosamine. Cysteine 119 (proton donor) is an active-site residue. Cysteine 119 bears the 2-(S-cysteinyl)pyruvic acid O-phosphothioketal mark. UDP-N-acetyl-alpha-D-glucosamine-binding residues include aspartate 313 and valine 335.

Belongs to the EPSP synthase family. MurA subfamily.

The protein resides in the cytoplasm. It catalyses the reaction phosphoenolpyruvate + UDP-N-acetyl-alpha-D-glucosamine = UDP-N-acetyl-3-O-(1-carboxyvinyl)-alpha-D-glucosamine + phosphate. It functions in the pathway cell wall biogenesis; peptidoglycan biosynthesis. Functionally, cell wall formation. Adds enolpyruvyl to UDP-N-acetylglucosamine. The sequence is that of UDP-N-acetylglucosamine 1-carboxyvinyltransferase from Protochlamydia amoebophila (strain UWE25).